The primary structure comprises 289 residues: ATP synthase subunit a (289 aa).

6 helical membrane passes run 43–63, 103–123, 160–180, 193–213, 232–252, and 259–279; these read AFHVDTLGWSVALGLIFVLLF, VIAPLALTIFVWVFLMNAVDL, FSVFALIIFYSIKVKGLGGFI, IFVQALLIPVNFLLEFVTLIA, VFILIAVMFGSGLLWLSGLGV, and AVFHILIITLQAFIFMMLTIV.

Belongs to the ATPase A chain family. In terms of assembly, F-type ATPases have 2 components, CF(1) - the catalytic core - and CF(0) - the membrane proton channel. CF(1) has five subunits: alpha(3), beta(3), gamma(1), delta(1), epsilon(1). CF(0) has three main subunits: a(1), b(2) and c(9-12). The alpha and beta chains form an alternating ring which encloses part of the gamma chain. CF(1) is attached to CF(0) by a central stalk formed by the gamma and epsilon chains, while a peripheral stalk is formed by the delta and b chains.

It localises to the cell inner membrane. Key component of the proton channel; it plays a direct role in the translocation of protons across the membrane. The polypeptide is ATP synthase subunit a (Pseudomonas fluorescens (strain Pf0-1)).